Reading from the N-terminus, the 352-residue chain is Secreted RxLR effector protein 122 (352 aa).

Positions 1–21 are cleaved as a signal peptide; sequence MRGAYYVLIALLVVASSQTSA. Positions 48–65 match the RxLR-dEER motif; the sequence is QFLRGSRNVPGDLAHEER. The segment covering 280-290 has biased composition (low complexity); it reads RGGTTGASRGT. Positions 280 to 352 are disordered; it reads RGGTTGASRG…VEPEGHRSKP (73 aa). Over residues 302 to 315 the composition is skewed to polar residues; that stretch reads AASTSKGKSSVFTE.

This sequence belongs to the RxLR effector family.

It localises to the secreted. The protein localises to the host nucleus. Its function is as follows. Secreted effector that acts as an elicitor that induces cell death in host plant cells. This is Secreted RxLR effector protein 122 from Plasmopara viticola (Downy mildew of grapevine).